Here is a 309-residue protein sequence, read N- to C-terminus: Homoserine kinase (309 aa).

Position 91 to 101 (91 to 101) interacts with ATP; that stretch reads PIGSGLGSSAC.

Belongs to the GHMP kinase family. Homoserine kinase subfamily.

It localises to the cytoplasm. It carries out the reaction L-homoserine + ATP = O-phospho-L-homoserine + ADP + H(+). It functions in the pathway amino-acid biosynthesis; L-threonine biosynthesis; L-threonine from L-aspartate: step 4/5. Functionally, catalyzes the ATP-dependent phosphorylation of L-homoserine to L-homoserine phosphate. The polypeptide is Homoserine kinase (Citrobacter koseri (strain ATCC BAA-895 / CDC 4225-83 / SGSC4696)).